A 333-amino-acid chain; its full sequence is Putative pectinesterase 14 (333 aa).

Residues 1-16 form the signal peptide; it reads MLFFILFLSIISPIES. 2 N-linked (GlcNAc...) asparagine glycosylation sites follow: Asn108 and Asn114. Thr116 provides a ligand contact to substrate. N-linked (GlcNAc...) asparagine glycosylation occurs at Asn133. Substrate is bound at residue Gln151. Asp174 functions as the Proton donor in the catalytic mechanism. Residue Asp195 is the Nucleophile of the active site. Residue Arg253 coordinates substrate. Residues Asn302 and Asn323 are each glycosylated (N-linked (GlcNAc...) asparagine).

This sequence belongs to the pectinesterase family. Expressed in flower buds.

It localises to the secreted. Its subcellular location is the cell wall. It carries out the reaction [(1-&gt;4)-alpha-D-galacturonosyl methyl ester](n) + n H2O = [(1-&gt;4)-alpha-D-galacturonosyl](n) + n methanol + n H(+). The protein operates within glycan metabolism; pectin degradation; 2-dehydro-3-deoxy-D-gluconate from pectin: step 1/5. In terms of biological role, acts in the modification of cell walls via demethylesterification of cell wall pectin. The chain is Putative pectinesterase 14 (PME14) from Arabidopsis thaliana (Mouse-ear cress).